The following is a 494-amino-acid chain: 3-octaprenyl-4-hydroxybenzoate carboxy-lyase (494 aa).

N172 is a Mn(2+) binding site. Prenylated FMN-binding positions include 175–177 (IYR), 189–191 (RWL), and 194–195 (RG). Position 238 (E238) interacts with Mn(2+). D294 functions as the Proton donor in the catalytic mechanism.

Belongs to the UbiD family. Homohexamer. Prenylated FMN serves as cofactor. Mn(2+) is required as a cofactor.

The protein localises to the cell membrane. It carries out the reaction a 4-hydroxy-3-(all-trans-polyprenyl)benzoate + H(+) = a 2-(all-trans-polyprenyl)phenol + CO2. Its pathway is cofactor biosynthesis; ubiquinone biosynthesis. Functionally, catalyzes the decarboxylation of 3-octaprenyl-4-hydroxy benzoate to 2-octaprenylphenol, an intermediate step in ubiquinone biosynthesis. The chain is 3-octaprenyl-4-hydroxybenzoate carboxy-lyase from Herminiimonas arsenicoxydans.